A 466-amino-acid polypeptide reads, in one-letter code: MAKTLYQKLFDAHVVHEAPNETPLLYIDRHLVHEVTSPQAFDGLRAHGRPVRQPRKTFATMDHNVSTQTKDINASGEMARIQMQELIKNCNEFGVELYDLNHPYQGIVHVMGPEQGITLPGMTIVCGDSHTATHGAFGALAFGIGTSEVEHVLATQTLKQGRAKTMKIEVNGRAAPGITAKDIVLAIIGKTGSAGGTGYVVEFCGDAIRALSMEGRMTLCNMAIEMGAKAGLVAPDETTFNYVKGRLHAPKGQDFDEAVAYWKTLKTDDGAQFDAVVTLNAEEIAPQVTWGTNPGQVIAVSDAIPDPASFADPVERASAEKALAYMGLKPGVPLTDVAIDKVFIGSCTNSRIEDLRAAAEIARGRKVAPGVQALVVPGSGPVKAQAEAEGLDKIFIEAGFEWRLPGCSMCLAMNNDRLNPGERCASTSNRNFEGRQGRGGRTHLVSPAMAAAAAVTGRFADIRSLK.

The [4Fe-4S] cluster site is built by Cys-347, Cys-407, and Cys-410.

It belongs to the aconitase/IPM isomerase family. LeuC type 1 subfamily. Heterodimer of LeuC and LeuD. It depends on [4Fe-4S] cluster as a cofactor.

The enzyme catalyses (2R,3S)-3-isopropylmalate = (2S)-2-isopropylmalate. Its pathway is amino-acid biosynthesis; L-leucine biosynthesis; L-leucine from 3-methyl-2-oxobutanoate: step 2/4. Functionally, catalyzes the isomerization between 2-isopropylmalate and 3-isopropylmalate, via the formation of 2-isopropylmaleate. The protein is 3-isopropylmalate dehydratase large subunit of Cronobacter sakazakii (strain ATCC BAA-894) (Enterobacter sakazakii).